The sequence spans 181 residues: Cytochrome c-type biogenesis protein CcmE (181 aa).

The Cytoplasmic portion of the chain corresponds to 1-8 (MNPRRKSR). Residues 9-29 (LKVVVLIMFSVAVAAGLTLYA) traverse the membrane as a helical; Signal-anchor for type II membrane protein segment. At 30 to 181 (LSQNIDLFYT…TFNTLQGESK (152 aa)) the chain is on the periplasmic side. Residues His131 and Tyr135 each coordinate heme.

Belongs to the CcmE/CycJ family.

The protein localises to the cell inner membrane. Heme chaperone required for the biogenesis of c-type cytochromes. Transiently binds heme delivered by CcmC and transfers the heme to apo-cytochromes in a process facilitated by CcmF and CcmH. The sequence is that of Cytochrome c-type biogenesis protein CcmE from Haemophilus ducreyi (strain 35000HP / ATCC 700724).